A 240-amino-acid chain; its full sequence is Dephospho-CoA kinase domain-containing protein (240 aa).

A DPCK domain is found at 3 to 207; it reads LVGLTGGIAS…RSMEYLPLRL (205 aa). Residue 8–15 coordinates ATP; the sequence is GGIASGKS.

This sequence belongs to the CoaE family.

The sequence is that of Dephospho-CoA kinase domain-containing protein (Dcakd) from Rattus norvegicus (Rat).